Consider the following 262-residue polypeptide: F-actin-capping protein subunit alpha (262 aa).

Belongs to the F-actin-capping protein alpha subunit family. As to quaternary structure, heterodimer of an alpha and a beta subunit.

Its function is as follows. F-actin-capping proteins bind in a Ca(2+)-independent manner to the fast growing ends of actin filaments (barbed end) thereby blocking the exchange of subunits at these ends. Unlike other capping proteins (such as gelsolin and severin), these proteins do not sever actin filaments. The protein is F-actin-capping protein subunit alpha (CAP1) of Candida glabrata (strain ATCC 2001 / BCRC 20586 / JCM 3761 / NBRC 0622 / NRRL Y-65 / CBS 138) (Yeast).